A 2016-amino-acid polypeptide reads, in one-letter code: Sodium channel protein type 5 subunit alpha (2016 aa).

Topologically, residues 1–129 (MANFLLPRGT…IRRAAVKILV (129 aa)) are cytoplasmic. A disordered region spans residues 28-56 (MAEKQARGSTTLQESREGLPEEEAPRPQL). Position 36 is a phosphoserine (serine 36). The residue at position 38 (threonine 38) is a Phosphothreonine. Over residues 41–52 (ESREGLPEEEAP) the composition is skewed to basic and acidic residues. An I repeat occupies 113–420 (VLSPFHPIRR…VVAMAYEEQN (308 aa)). The helical transmembrane segment at 130-149 (HSLFNMLIMCTILTNCVFMA) threads the bilayer. Topologically, residues 150–157 (QHDPPPWT) are extracellular. The chain crosses the membrane as a helical span at residues 158 to 179 (KYVEYTFTAIYTFESLVKILAR). The Cytoplasmic segment spans residues 180 to 188 (GFCLHAFTF). The helical transmembrane segment at 189 to 209 (LRDPWNWLDFSVIIMAYTTEF) threads the bilayer. Topologically, residues 210-216 (VDLGNVS) are extracellular. A glycan (N-linked (GlcNAc...) asparagine) is linked at asparagine 214. The helical transmembrane segment at 217–236 (ALRTFRVLRALKTISVISGL) threads the bilayer. The Cytoplasmic segment spans residues 237 to 249 (KTIVGALIQSVKK). The helical transmembrane segment at 250-272 (LADVMVLTVFCLSVFALIGLQLF) threads the bilayer. Topologically, residues 273–357 (MGNLRHKCVR…PDHGYTSFDS (85 aa)) are extracellular. Cysteine 280 and cysteine 335 are oxidised to a cystine. Asparagine 283, asparagine 288, asparagine 291, asparagine 318, and asparagine 328 each carry an N-linked (GlcNAc...) asparagine glycan. An intramembrane region (pore-forming) is located at residues 358-378 (FAWAFLALFRLMTQDCWERLY). At 379-386 (QQTLRSAG) the chain is on the extracellular side. Residues 387–413 (KIYMIFFMLVIFLGSFYLVNLILAVVA) form a helical membrane-spanning segment. The Cytoplasmic portion of the chain corresponds to 414–719 (MAYEEQNQAT…VKLVVMDPFT (306 aa)). Phosphoserine is present on residues serine 457, serine 460, serine 483, and serine 484. Positions 461–591 (LEMSPLAPVN…APGHALHGKK (131 aa)) are disordered. Residue threonine 486 is modified to Phosphothreonine. Over residues 491–503 (EDRLPKSDSEDGP) the composition is skewed to basic and acidic residues. Phosphoserine occurs at positions 497 and 510. Residues 509–528 (LSLTRGLSRTSMKPRSSRGS) are compositionally biased toward polar residues. A dimethylated arginine; alternate mark is found at arginine 513 and arginine 526. 2 positions are modified to omega-N-methylarginine; alternate: arginine 513 and arginine 526. 4 positions are modified to phosphoserine: serine 539, serine 571, serine 664, and serine 667. Over residues 570-580 (TSAQGQPSPGT) the composition is skewed to polar residues. Arginine 680 is subject to Dimethylated arginine; alternate. Arginine 680 carries the omega-N-methylarginine; alternate modification. Residues 699–969 (CCPLWMSIKQ…QLALARIQRG (271 aa)) form an II repeat. The chain crosses the membrane as a helical span at residues 720-737 (DLTITMCIVLNTLFMALE). The Extracellular portion of the chain corresponds to 738 to 746 (HYNMTSEFE). N-linked (GlcNAc...) asparagine glycosylation is present at asparagine 740. Residues 747-769 (EMLQVGNLVFTGIFTAEMTFKII) traverse the membrane as a helical segment. The Cytoplasmic segment spans residues 770–775 (ALDPYY). Residues 776–796 (YFQQGWNIFDSIIVILSLMEL) traverse the membrane as a helical segment. The Extracellular portion of the chain corresponds to 797-806 (GLSRMSNLSV). Asparagine 803 is a glycosylation site (N-linked (GlcNAc...) asparagine). Residues 807-821 (LRSFRLLRVFKLAKS) form a helical membrane-spanning segment. At 822 to 838 (WPTLNTLIKIIGNSVGA) the chain is on the cytoplasmic side. Residues 839–860 (LGNLTLVLAIIVFIFAVVGMQL) traverse the membrane as a helical segment. At 861 to 884 (FGKNYSELRDSDSGLLPRWHMMDF) the chain is on the extracellular side. Asparagine 864 is a glycosylation site (N-linked (GlcNAc...) asparagine). Residues 885 to 903 (FHAFLIIFRILCGEWIETM) constitute an intramembrane region (pore-forming). Over 904-912 (WDCMEVSGQ) the chain is Extracellular. The cysteines at positions 906 and 915 are disulfide-linked. The helical transmembrane segment at 913-941 (SLCLLVFLLVMVIGNLVVLNLFLALLLSS) threads the bilayer. Topologically, residues 942–1203 (FSADNLTAPD…LRKTCYHIVE (262 aa)) are cytoplasmic. The disordered stretch occupies residues 1005-1141 (IATPYSPPPP…PEDSCSEGST (137 aa)). The span at 1015–1030 (ETEKVPPTRKETRFEE) shows a compositional bias: basic and acidic residues. The span at 1033-1044 (QPGQGTPGDPEP) shows a compositional bias: low complexity. Positions 1054-1071 (SDTDDQEEDEENSLGTEE) are enriched in acidic residues. Over residues 1096–1113 (SQVSATASSEAEASASQA) the composition is skewed to low complexity. An III repeat occupies 1187–1501 (PGKVWWRLRK…KKYYNAMKKL (315 aa)). The helical transmembrane segment at 1204 to 1225 (HSWFETFIIFMILLSSGALAFE) threads the bilayer. At 1226–1236 (DIYLEERKTIK) the chain is on the extracellular side. A helical transmembrane segment spans residues 1237–1259 (VLLEYADKMFTYVFVLEMLLKWV). The Cytoplasmic portion of the chain corresponds to 1260-1268 (AYGFKKYFT). The chain crosses the membrane as a helical span at residues 1269–1291 (NAWCWLDFLIVDVSLVSLVANTL). Topologically, residues 1292–1297 (GFAEMG) are extracellular. A helical transmembrane segment spans residues 1298–1317 (PIKSLRTLRALRPLRALSRF). Residues 1318 to 1330 (EGMRVVVNALVGA) are Cytoplasmic-facing. Residues 1331 to 1355 (IPSIMNVLLVCLIFWLIFSIMGVNL) form a helical membrane-spanning segment. The Extracellular segment spans residues 1356 to 1400 (FAGKFGRCINQTEGDLPLNYTIVNNKSQCESLNLTGELYWTKVKV). 4 N-linked (GlcNAc...) asparagine glycosylation sites follow: asparagine 1365, asparagine 1374, asparagine 1380, and asparagine 1388. The segment at residues 1401–1422 (NFDNVGAGYLALLQVATFKGWM) is an intramembrane region (pore-forming). Residues 1423–1445 (DIMYAAVDSRGYEEQPQWEYNLY) lie on the Extracellular side of the membrane. Residues 1446 to 1470 (MYIYFVIFIIFGSFFTLNLFIGVII) form a helical membrane-spanning segment. Residues 1471 to 1528 (DNFNQQKKKLGGQDIFMTEEQKKYYNAMKKLGSKKPQKPIPRPLNKYQGFIFDIVTKQ) lie on the Cytoplasmic side of the membrane. Residue serine 1503 is modified to Phosphoserine; by PKC. An IV repeat occupies 1510–1807 (IPRPLNKYQG…WEKFDPEATQ (298 aa)). A helical transmembrane segment spans residues 1529-1547 (AFDVTIMFLICLNMVTMMV). Residues 1548 to 1558 (ETDDQSPEKIN) are Extracellular-facing. The chain crosses the membrane as a helical span at residues 1559–1580 (ILAKINLLFVAIFTGECIVKLA). Topologically, residues 1581–1589 (ALRHYYFTN) are cytoplasmic. The chain crosses the membrane as a helical span at residues 1590-1612 (SWNIFDFVVVILSIVGTVLSDII). Topologically, residues 1613–1619 (QKYFFSP) are extracellular. The helical transmembrane segment at 1620–1640 (TLFRVIRLARIGRILRLIRGA) threads the bilayer. Residues 1641-1650 (KGIRTLLFAL) are Cytoplasmic-facing. The chain crosses the membrane as a helical span at residues 1651-1679 (MMSLPALFNIGLLLFLVMFIYSIFGMANF). Residues 1680 to 1697 (AYVKWEAGIDDMFNFQTF) lie on the Extracellular side of the membrane. Residues 1698–1714 (ANSMLCLFQITTSAGWD) constitute an intramembrane region (pore-forming). Topologically, residues 1715 to 1745 (GLLSPILNTGPPYCDPTLPNSNGSRGDCGSP) are extracellular. An N-linked (GlcNAc...) asparagine glycan is attached at asparagine 1736. Residues 1746-1771 (AVGILFFTTYIIISFLIVVNMYIAII) traverse the membrane as a helical segment. Over 1772–2016 (LENFSVATEE…SPDRDRESIV (245 aa)) the chain is Cytoplasmic. Residues 1839–1901 (DLPMVSGDRI…ITTTLRRKHE (63 aa)) form an interaction with FGF13 region. The IQ domain maps to 1901-1930 (EEVSAMVIQRAFRRHLLQRSLKHASFLFRQ). Over residues 1959–1979 (PLGPPSSSSISSTSFPPSYDS) the composition is skewed to low complexity. The interval 1959–2016 (PLGPPSSSSISSTSFPPSYDSVTRATSDNLQVRGSDYSHSEDLADFPPSPDRDRESIV) is disordered. The interval 1974-1977 (PPSY) is interaction with NEDD4, NEDD4L and WWP2. Residues 1981–1990 (TRATSDNLQV) show a composition bias toward polar residues.

This sequence belongs to the sodium channel (TC 1.A.1.10) family. Nav1.5/SCN5A subfamily. In terms of assembly, cannot form the same regulatory interactions with beta subunits as other Navs do. Interacts with the PDZ domain of the syntrophin SNTA1, SNTB1 and SNTB2. Interacts with NEDD4, NEDD4L, WWP2 and GPD1L. Interacts with CALM. Interacts with FGF13; the interaction is direct and FGF13 may regulate SNC5A density at membranes and function. May also interact with FGF12 and FGF14. Interacts with TMEM233. Interacts with the spider Jingzhaotoxin-I (AC P83974, AC B1P1B7, AC B1P1B8). Interacts with ANK3. Interacts with PKP2 (via N-terminus). Interacts with XIRP2; the interaction is required for normal action potential configuration in the heart. In terms of processing, ubiquitinated by NEDD4L; which promotes its endocytosis. Does not seem to be ubiquitinated by NEDD4 or WWP2. Phosphorylation at Ser-1503 by PKC in a highly conserved cytoplasmic loop slows inactivation of the sodium channel and reduces peak sodium currents. Regulated through phosphorylation by CaMK2D. Post-translationally, lacks the cysteine which covalently binds the conotoxin GVIIJ. This cysteine (position 868) is speculated in other sodium channel subunits alpha to be implied in covalent binding with the sodium channel subunit beta-2 or beta-4. In terms of processing, N-glycosylated at Asn-318, probably hinders potential interaction with regulatory subunits. As to expression, found in jejunal circular smooth muscle cells (at protein level). Expressed in human atrial and ventricular cardiac muscle but not in adult skeletal muscle, brain, myometrium, liver, or spleen. Isoform 4 is expressed in brain.

Its subcellular location is the cell membrane. The protein resides in the cytoplasm. It is found in the perinuclear region. The protein localises to the sarcolemma. It localises to the T-tubule. Its subcellular location is the cell junction. It carries out the reaction Na(+)(in) = Na(+)(out). Its activity is regulated as follows. Channel inactivation is regulated by intracellular calcium levels. It is a tetrodotoxin-resistant voltage-gated Na(+) channel (Nav). In terms of biological role, pore-forming subunit of Nav1.5, a voltage-gated sodium (Nav) channel that directly mediates the depolarizing phase of action potentials in excitable membranes. Navs, also called VGSCs (voltage-gated sodium channels) or VDSCs (voltage-dependent sodium channels), operate by switching between closed and open conformations depending on the voltage difference across the membrane. In the open conformation they allow Na(+) ions to selectively pass through the pore, along their electrochemical gradient. The influx of Na(+) ions provokes membrane depolarization, initiating the propagation of electrical signals throughout cells and tissues. Nav1.5 is the predominant sodium channel expressed in myocardial cells and it is responsible for the initial upstroke of the action potential in cardiac myocytes, thereby initiating the heartbeat. Required for normal electrical conduction including formation of the infranodal ventricular conduction system and normal action potential configuration, as a result of its interaction with XIRP2. The protein is Sodium channel protein type 5 subunit alpha of Homo sapiens (Human).